Here is a 411-residue protein sequence, read N- to C-terminus: Serine hydroxymethyltransferase (411 aa).

Residue 120-122 (GHL) participates in (6S)-5,6,7,8-tetrahydrofolate binding. At Lys225 the chain carries N6-(pyridoxal phosphate)lysine. (6S)-5,6,7,8-tetrahydrofolate-binding positions include Glu241 and 350-352 (SPF).

This sequence belongs to the SHMT family. In terms of assembly, homodimer. The cofactor is pyridoxal 5'-phosphate.

It is found in the cytoplasm. It carries out the reaction (6R)-5,10-methylene-5,6,7,8-tetrahydrofolate + glycine + H2O = (6S)-5,6,7,8-tetrahydrofolate + L-serine. It participates in one-carbon metabolism; tetrahydrofolate interconversion. It functions in the pathway amino-acid biosynthesis; glycine biosynthesis; glycine from L-serine: step 1/1. Its function is as follows. Catalyzes the reversible interconversion of serine and glycine with tetrahydrofolate (THF) serving as the one-carbon carrier. This reaction serves as the major source of one-carbon groups required for the biosynthesis of purines, thymidylate, methionine, and other important biomolecules. Also exhibits THF-independent aldolase activity toward beta-hydroxyamino acids, producing glycine and aldehydes, via a retro-aldol mechanism. This chain is Serine hydroxymethyltransferase, found in Limosilactobacillus fermentum (strain NBRC 3956 / LMG 18251) (Lactobacillus fermentum).